A 259-amino-acid polypeptide reads, in one-letter code: MTMPYYASAEQIMRDRSELARKGIARGRSVVVLTFRDGVLFVAENPSTALHKVSELYDRLGFAAVGKYNEFENLRRAGIVHADMRGYSYDRRDVTGRSLANAYAQTLGTIFTEQPKPYEVEICVAEVGRVGSPKAPQLYRITYDGSIVDEQHFVVMGGTTEPIATAMRESYRADLDLEAAVGIAVNALRQGGAGEGEKRNVDVASLEVAVLDQSRPRRAFRRIAGTALEQLVPAEPAAASESAPEPKPDTETKPADTQD.

The segment at 231–259 is disordered; it reads LVPAEPAAASESAPEPKPDTETKPADTQD. Low complexity predominate over residues 233–243; that stretch reads PAEPAAASESA. A compositionally biased stretch (basic and acidic residues) spans 244–259; it reads PEPKPDTETKPADTQD.

The protein belongs to the peptidase T1A family. In terms of assembly, the 20S proteasome core is composed of 14 alpha and 14 beta subunits that assemble into four stacked heptameric rings, resulting in a barrel-shaped structure. The two inner rings, each composed of seven catalytic beta subunits, are sandwiched by two outer rings, each composed of seven alpha subunits. All four combinations of alpha- and beta-subunits (beta2-alpha1, beta2-alpha2, beta1-alpha2 and beta1-alpha1) yield fully assembled and proteolytically active proteasomes. The catalytic chamber with the active sites is on the inside of the barrel. Has probably a gated structure, the ends of the cylinder being occluded by the N-termini of the alpha-subunits. Is likely capped by the proteasome-associated ATPase, ARC. The N-terminus is blocked.

The protein localises to the cytoplasm. It functions in the pathway protein degradation; proteasomal Pup-dependent pathway. Its activity is regulated as follows. The formation of the proteasomal ATPase ARC-20S proteasome complex, likely via the docking of the C-termini of ARC into the intersubunit pockets in the alpha-rings, may trigger opening of the gate for substrate entry. Interconversion between the open-gate and close-gate conformations leads to a dynamic regulation of the 20S proteasome proteolysis activity. Functionally, component of the proteasome core, a large protease complex with broad specificity involved in protein degradation. The R.erythropolis proteasomes are able to cleave oligopeptides after Tyr, Phe and Leu, very poorly after Arg but not after Glu. Thus, displays chymotrypsin-like activity, low trypsin-like activity but no caspase-like activity. The chain is Proteasome subunit alpha 1 from Rhodococcus erythropolis (Arthrobacter picolinophilus).